The primary structure comprises 438 residues: Na(+)/H(+) antiporter NhaA (438 aa).

Helical transmembrane passes span 23 to 43, 62 to 82, 104 to 124, 133 to 153, 162 to 182, 185 to 205, 221 to 241, 302 to 322, 337 to 357, 372 to 392, and 410 to 430; these read FGGIFLFLNAVLAMVVANSFL, FFIGFSLHNWIDDVLMALFFL, SFPVIAALGGMIAPGLIYFFL, GFGIPMATDIAFALGVIMLLG, VFLITLAVADDLGAIIVIALF, TNLKFAWLLGALGVVLLLALL, VLLWFCVHQSGIHATIAAVVL, FLAPISGYFIMPLFAFANAGV, FGVILGLCLGKPLGIFLITFI, WWHILGAGLLAGIGFTMSMFI, and IAILLGSLISGIIGALYLFAL.

It belongs to the NhaA Na(+)/H(+) (TC 2.A.33) antiporter family.

Its subcellular location is the cell inner membrane. It carries out the reaction Na(+)(in) + 2 H(+)(out) = Na(+)(out) + 2 H(+)(in). Functionally, na(+)/H(+) antiporter that extrudes sodium in exchange for external protons. The chain is Na(+)/H(+) antiporter NhaA from Helicobacter pylori (strain P12).